A 148-amino-acid polypeptide reads, in one-letter code: UPF0756 membrane protein ESA_02180 (148 aa).

4 helical membrane-spanning segments follow: residues I4 to V24, V51 to L71, L86 to M106, and I112 to V132.

The protein belongs to the UPF0756 family.

The protein resides in the cell membrane. In Cronobacter sakazakii (strain ATCC BAA-894) (Enterobacter sakazakii), this protein is UPF0756 membrane protein ESA_02180.